The following is a 76-amino-acid chain: Omega-conotoxin-like TeAr94 (76 aa).

A signal peptide spans 1 to 22 (MKLTCMMIVAVLFLTAWTFVTA). A propeptide spanning residues 23 to 50 (VPHSSNALENLYLKAHHEMNNPEDSELN) is cleaved from the precursor. Disulfide bonds link C53/C67, C60/C71, and C66/C75.

This sequence belongs to the conotoxin O1 superfamily. Expressed by the venom duct.

The protein resides in the secreted. Its function is as follows. Omega-conotoxins act at presynaptic membranes, they bind and block voltage-gated calcium channels. This chain is Omega-conotoxin-like TeAr94, found in Conus textile (Cloth-of-gold cone).